Here is a 181-residue protein sequence, read N- to C-terminus: MTLEQNYTAILGQLGEDVSREGLLDTPKRAAKAMQYLCRGYAQTLEEVTNGALFSSDASEMVMVKDIELYSLCEHHLLPFIGKAHVAYIPNGKVLGLSKVARIVDMYARRLQIQENLSRQIAEAIQQVTGAQGVAVVIEAKHMCMMMRGVEKQNSAMITSVMLGEFRENAATRSEFLSLIK.

Belongs to the GTP cyclohydrolase I family. As to quaternary structure, homomer.

It catalyses the reaction GTP + H2O = 7,8-dihydroneopterin 3'-triphosphate + formate + H(+). The protein operates within cofactor biosynthesis; 7,8-dihydroneopterin triphosphate biosynthesis; 7,8-dihydroneopterin triphosphate from GTP: step 1/1. The protein is GTP cyclohydrolase 1 2 of Pseudomonas syringae pv. tomato (strain ATCC BAA-871 / DC3000).